A 1836-amino-acid chain; its full sequence is Druantia protein DruE (1836 aa).

Residues 108–405 (SFLGEDASDL…FAQDLTGLSP (298 aa)) enclose the Helicase ATP-binding domain. ATP is bound at residue 121–128 (TGTGSGKT). Positions 347 to 350 (DEAH) match the DEAH box motif. A Helicase C-terminal domain is found at 1014–1199 (DCTALMPFAL…EVKVNNPKIA (186 aa)).

The protein localises to the cytoplasm. In terms of biological role, component of antiviral defense system Druantia type I, composed of DruA, DruB, DruC, DruD and DruE. Expression of Druantia in E.coli (strain MG1655) confers resistance to phage lambda, SECphi18, SECphi27 and T4. This protein is probably a helicase. This Escherichia coli (strain UMEA 4076-1) protein is Druantia protein DruE.